The primary structure comprises 236 residues: Ubiquinone biosynthesis O-methyltransferase (236 aa).

S-adenosyl-L-methionine-binding residues include R39, G59, D80, and M124.

The protein belongs to the methyltransferase superfamily. UbiG/COQ3 family.

The catalysed reaction is a 3-demethylubiquinol + S-adenosyl-L-methionine = a ubiquinol + S-adenosyl-L-homocysteine + H(+). The enzyme catalyses a 3-(all-trans-polyprenyl)benzene-1,2-diol + S-adenosyl-L-methionine = a 2-methoxy-6-(all-trans-polyprenyl)phenol + S-adenosyl-L-homocysteine + H(+). The protein operates within cofactor biosynthesis; ubiquinone biosynthesis. Its function is as follows. O-methyltransferase that catalyzes the 2 O-methylation steps in the ubiquinone biosynthetic pathway. This is Ubiquinone biosynthesis O-methyltransferase from Shewanella pealeana (strain ATCC 700345 / ANG-SQ1).